The primary structure comprises 98 residues: Small ribosomal subunit protein bS20 (98 aa).

Over residues M1–R15 the composition is skewed to basic residues. A disordered region spans residues M1 to R21.

Belongs to the bacterial ribosomal protein bS20 family.

Binds directly to 16S ribosomal RNA. The sequence is that of Small ribosomal subunit protein bS20 from Chlamydia abortus (strain DSM 27085 / S26/3) (Chlamydophila abortus).